The chain runs to 30 residues: Hainantoxin F6-34.84 (30 aa).

Cystine bridges form between Cys2-Cys15 and Cys9-Cys24.

It belongs to the AVIT (prokineticin) family. Expressed by the venom gland.

Its subcellular location is the secreted. In Cyriopagopus hainanus (Chinese bird spider), this protein is Hainantoxin F6-34.84.